Consider the following 516-residue polypeptide: Endo-acting ulvan lyase (516 aa).

Residues 1 to 24 (MLEKTTLKNIILIHFLMFLAVVTA) form the signal peptide. A disulfide bridge connects residues C38 and C65. Ca(2+) is bound by residues G42, N44, D62, S64, A67, and N68. Y138 is a substrate binding site. K143 serves as the catalytic Proton acceptor. Substrate-binding positions include 191–195 (EGDGR) and 260–263 (YRVK). Y260 functions as the Proton donor/acceptor in the catalytic mechanism. Positions 289–429 (PIGDVYKLKN…VWKAIAVESL (141 aa)) are ulvan-binding domain. A propeptide spans 430–516 (SVDENAILAS…NKYHKKLIVK (87 aa)) (removed by the type IX secretion system (T9SS)).

Belongs to the polysaccharide lyase 28 family. Requires Ca(2+) as cofactor.

Its subcellular location is the secreted. Ulvan lyase involved in ulvan degradation. Ulvan is the main polysaccharide component of the Ulvales (green seaweed) cell wall. It is composed of disaccharide building blocks comprising 3-sulfated rhamnose (Rha3S) linked to D-glucuronic acid (GlcA), L-iduronic acid (IduA), or D-xylose (Xyl). Ulvan lyase catalyzes the endolytic cleavage of the glycosidic bond between Rha3S and the uronic acids GlcA or IduA, producing oligosaccharides that have unsaturated 4-deoxy-L-threo-hex-4-enopyranosiduronic acid (deltaUA) at the non-reducing end. This results eventually in the degradation of the ulvan polysaccharide into deltaUA-Rha3S disaccharides and deltaUA-Rha3S-Xyl-Rha3S tetrasaccharides. This chain is Endo-acting ulvan lyase, found in Formosa agariphila (strain DSM 15362 / KCTC 12365 / LMG 23005 / KMM 3901 / M-2Alg 35-1).